Here is a 319-residue protein sequence, read N- to C-terminus: RNA polymerase II holoenzyme cyclin-like subunit (319 aa).

In terms of domain architecture, Cyclin N-terminal spans 53–142; that stretch reads QQLIRLAKRL…LGECEFFMIS (90 aa). Residues 237–251 show a composition bias toward low complexity; it reads QGQQAQGGMPEPAAA. Positions 237 to 261 are disordered; it reads QGQQAQGGMPEPAAAEPKEKRQQDR. The segment covering 252–261 has biased composition (basic and acidic residues); it reads EPKEKRQQDR.

The protein belongs to the cyclin family. Cyclin C subfamily. In terms of assembly, component of the SRB8-11 complex, a regulatory module of the Mediator complex. Interacts with SSN3/FCK1.

It is found in the nucleus. Component of the SRB8-11 complex. The SRB8-11 complex is a regulatory module of the Mediator complex which is itself involved in regulation of basal and activated RNA polymerase II-dependent transcription. The SRB8-11 complex may be involved in the transcriptional repression of a subset of genes regulated by Mediator. It may inhibit the association of the Mediator complex with RNA polymerase II to form the holoenzyme complex. The SRB8-11 complex phosphorylates the C-terminal domain (CTD) of the largest subunit of RNA polymerase II. May play a role in signal transduction pathways regulating secondary metabolism and fungal development (conidiation). This is RNA polymerase II holoenzyme cyclin-like subunit (SSN8) from Gibberella moniliformis (Maize ear and stalk rot fungus).